The chain runs to 78 residues: Small ribosomal subunit protein uS17 (78 aa).

It belongs to the universal ribosomal protein uS17 family. As to quaternary structure, part of the 30S ribosomal subunit.

Its function is as follows. One of the primary rRNA binding proteins, it binds specifically to the 5'-end of 16S ribosomal RNA. This is Small ribosomal subunit protein uS17 from Wolbachia pipientis wMel.